The primary structure comprises 418 residues: uncharacterized protein (418 aa).

Disordered stretches follow at residues 123-174 (KVKD…DSDK), 209-231 (FDKE…EKEE), 258-302 (KDDN…DEEL), and 344-418 (KDAD…YFKK). Residues 136–154 (NKKDKKDKNKQNEEDHLII) are compositionally biased toward basic and acidic residues. Residues 156–170 (DVIDEEIQEKEDNES) are compositionally biased toward acidic residues. Positions 209-227 (FDKEEKEREKEKEKEKEKE) are enriched in basic and acidic residues. Residues 266-293 (NQNQNQNQNNNNNNNNNNNNNNNNNNNN) are compositionally biased toward low complexity. Positions 344–356 (KDADDSDDFDEFN) are enriched in acidic residues. The segment covering 359 to 374 (DTESQLSKSKQKSPNV) has biased composition (polar residues). The span at 375-390 (KKTTTTTTTSTSTSSR) shows a compositional bias: low complexity. Residues 391 to 401 (KQSKSKLKPKS) show a composition bias toward basic residues.

This is an uncharacterized protein from Dictyostelium discoideum (Social amoeba).